Reading from the N-terminus, the 393-residue chain is Acetylornithine aminotransferase 1 (393 aa).

R131 is a N(2)-acetyl-L-ornithine binding site. 215–218 contacts pyridoxal 5'-phosphate; that stretch reads DEVQ. The residue at position 244 (K244) is an N6-(pyridoxal phosphate)lysine. N(2)-acetyl-L-ornithine is bound at residue T272. T273 is a pyridoxal 5'-phosphate binding site.

It belongs to the class-III pyridoxal-phosphate-dependent aminotransferase family. ArgD subfamily. As to quaternary structure, homodimer. It depends on pyridoxal 5'-phosphate as a cofactor.

It is found in the cytoplasm. It catalyses the reaction N(2)-acetyl-L-ornithine + 2-oxoglutarate = N-acetyl-L-glutamate 5-semialdehyde + L-glutamate. Its pathway is amino-acid biosynthesis; L-arginine biosynthesis; N(2)-acetyl-L-ornithine from L-glutamate: step 4/4. The sequence is that of Acetylornithine aminotransferase 1 from Bordetella bronchiseptica (strain ATCC BAA-588 / NCTC 13252 / RB50) (Alcaligenes bronchisepticus).